Reading from the N-terminus, the 260-residue chain is MSEDVIAEIKRDYIYSLANQGDRADGRKFDEFRAISVETGVINKAEGSARVKIGDSQVVVGVKIQPGEPFPDTPDSGVIITNLELVPLASPTFESGPPREDAIELARVVDRGVRESGAIDLSKLCIESGQKVWMVFIDVHVLDHDGNLMDAASLGAIAALKATKIPNSKFGLGEDVKLPLNDVPIGVTAVNIGGAIMLDPSLDEESVAPCKLTVITNKEGAISGMQKSGVGTLTPDQINHIIRLAKEKANVLREKLEGIQ.

The protein belongs to the RNase PH family. Rrp42 subfamily. In terms of assembly, component of the archaeal exosome complex. Forms a hexameric ring-like arrangement composed of 3 Rrp41-Rrp42 heterodimers. The hexameric ring associates with a trimer of Rrp4 and/or Csl4 subunits.

Its subcellular location is the cytoplasm. Non-catalytic component of the exosome, which is a complex involved in RNA degradation. Contributes to the structuring of the Rrp41 active site. This Methanocella arvoryzae (strain DSM 22066 / NBRC 105507 / MRE50) protein is Exosome complex component Rrp42.